The chain runs to 86 residues: MSLLDYFKTKKEPSTAVTAKERLQIIVAHQRGERGAPDYFPQMKQEIIEVIRKYVQVGPDQVSVQLEQTDDNFSVLELNVTLPEQS.

This sequence belongs to the MinE family.

Functionally, prevents the cell division inhibition by proteins MinC and MinD at internal division sites while permitting inhibition at polar sites. This ensures cell division at the proper site by restricting the formation of a division septum at the midpoint of the long axis of the cell. The sequence is that of Cell division topological specificity factor from Shewanella halifaxensis (strain HAW-EB4).